Reading from the N-terminus, the 492-residue chain is Putative transporter SVOPL (492 aa).

Transmembrane regions (helical) follow at residues 48–68 (IALF…IMLI), 86–106 (VALV…LFGL), 121–141 (FLWG…IWFV), 179–199 (VFWL…IPTI), 203–223 (WLIR…KFIP), 281–301 (TLQI…VILA), 348–368 (IIST…INFL), 383–403 (LFFL…FLFM), 429–449 (ALGM…APFI), and 458–478 (ILGA…SAFT).

It belongs to the major facilitator superfamily.

Its subcellular location is the membrane. This Homo sapiens (Human) protein is Putative transporter SVOPL (SVOPL).